The primary structure comprises 644 residues: Threonine--tRNA ligase (644 aa).

One can recognise a TGS domain in the interval M1–T61. The catalytic stretch occupies residues D242–P535. Zn(2+) is bound by residues C335, H386, and H512.

Belongs to the class-II aminoacyl-tRNA synthetase family. In terms of assembly, homodimer. The cofactor is Zn(2+).

It localises to the cytoplasm. The catalysed reaction is tRNA(Thr) + L-threonine + ATP = L-threonyl-tRNA(Thr) + AMP + diphosphate + H(+). In terms of biological role, catalyzes the attachment of threonine to tRNA(Thr) in a two-step reaction: L-threonine is first activated by ATP to form Thr-AMP and then transferred to the acceptor end of tRNA(Thr). Also edits incorrectly charged L-seryl-tRNA(Thr). This Nitrosococcus oceani (strain ATCC 19707 / BCRC 17464 / JCM 30415 / NCIMB 11848 / C-107) protein is Threonine--tRNA ligase.